The following is a 540-amino-acid chain: (13S,14R)-13-O-acetyl-1-hydroxy-N-methylcanadine 8-hydroxylase CYP82X1 (540 aa).

Residues 15-35 traverse the membrane as a helical segment; that stretch reads FSIILVTTVSIVLLYSVFFWV. C483 is a binding site for heme.

The protein belongs to the cytochrome P450 family. The cofactor is heme. As to expression, highly expressed in capsules. Expressed is stems.

Its subcellular location is the membrane. It carries out the reaction (13S,14R)-13-O-acetyl-1-hydroxy-N-methylcanadine + reduced [NADPH--hemoprotein reductase] + O2 = (13S,14R)-13-O-acetyl-1,8-dihydroxy-N-methylcanadine + oxidized [NADPH--hemoprotein reductase] + H2O + H(+). It participates in alkaloid biosynthesis. Cytochrome P450 involved in the biosynthesis of the benzylisoquinoline alkaloid noscapine. Converts (13S,14R)-13-O-acetyl-1-hydroxy-N-methylcanadine to (13S,14R)-13-O-acetyl-1,8-dihydroxy-N-methylcanadine. This chain is (13S,14R)-13-O-acetyl-1-hydroxy-N-methylcanadine 8-hydroxylase CYP82X1, found in Papaver somniferum (Opium poppy).